Consider the following 406-residue polypeptide: Enoyl-[acyl-carrier-protein] reductase [NADH] (406 aa).

Residues 48-53 (GASTGF), 74-75 (FE), 111-112 (DA), and 140-141 (IA) contribute to the NAD(+) site. Substrate is bound at residue Tyr-226. Tyr-236 acts as the Proton donor in catalysis. NAD(+)-binding positions include Lys-245 and 275-277 (LVT).

This sequence belongs to the TER reductase family. In terms of assembly, monomer.

The enzyme catalyses a 2,3-saturated acyl-[ACP] + NAD(+) = a (2E)-enoyl-[ACP] + NADH + H(+). It participates in lipid metabolism; fatty acid biosynthesis. Its function is as follows. Involved in the final reduction of the elongation cycle of fatty acid synthesis (FAS II). Catalyzes the reduction of a carbon-carbon double bond in an enoyl moiety that is covalently linked to an acyl carrier protein (ACP). In Coxiella burnetii (strain RSA 331 / Henzerling II), this protein is Enoyl-[acyl-carrier-protein] reductase [NADH].